Here is an 863-residue protein sequence, read N- to C-terminus: Importin subunit beta-1 (863 aa).

19 HEAT repeats span residues Asn2–Thr31, Phe33–Lys62, Val85–Thr124, Asp129–Glu159, Ser170–Ser201, Glu212–Tyr248, Pro253–Glu299, Phe314–Gly360, Val364–Ser392, Val399–Val439, Leu449–Phe481, Tyr496–Phe530, Leu536–Arg586, Arg592–Leu630, Glu635–Ala671, Leu677–Ile715, Gln720–Ala767, Gln778–Ser815, and Lys822–Ala861. Residues Ala21 to Ser101 form the Importin N-terminal domain.

This sequence belongs to the importin beta family. Importin beta-1 subfamily. In terms of assembly, forms a complex with an importin alpha subunit. Interacts with Ran; interacts specifically with the GTP-bound form of Ran (GTP-Ran), protecting it from GTP hydrolysis and nucleotide exchange. Interacts with nucleoporins.

Its subcellular location is the cytoplasm. The protein resides in the nucleus envelope. The protein localises to the nucleus. It localises to the nuclear pore complex. In terms of biological role, importin beta subunit that functions in nuclear protein import through association with the importin alpha subunit, which binds to the clasical nuclear localization signal (cNLS) in cargo substrates. Docking of the importin/substrate complex to the nuclear pore complex (NPC) is mediated by importin beta through binding to nucleoporin FxFG repeats and the complex is subsequently translocated through the pore by an energy requiring, Ran-dependent mechanism. At the nucleoplasmic side of the NPC, GTP-Ran binds to importin beta and the three components separate, leading to release of the cargo. Importin alpha and beta are re-exported from the nucleus to the cytoplasm where GTP hydrolysis releases Ran from importin beta. The directionality of nuclear import is thought to be conferred by an asymmetric distribution of the GTP- and GDP-bound forms of Ran between the cytoplasm and nucleus. This chain is Importin subunit beta-1, found in Schizosaccharomyces pombe (strain 972 / ATCC 24843) (Fission yeast).